A 184-amino-acid chain; its full sequence is MAILSDKWIRDKALNEGMIEPFVENQRRDGCISYGLSSYGYDARVAPEFKIFTNVDSAVVDPKDFASNSFVDRETDVCVIPPNSFALARTVEYFRVPRDVLVICLGKSTYARCGIIVNVTPLEPGWEGHVTLEFSNTTPLPAKIYANEGACQFLFLQGNEPCEVSYADRAGKYMGQRGVTLPRL.

DCTP is bound by residues 107 to 112 (KSTYAR), 131 to 133 (TLE), Gln-152, Tyr-166, and Gln-176. Glu-133 acts as the Proton donor/acceptor in catalysis.

The protein belongs to the dCTP deaminase family. As to quaternary structure, homotrimer.

The enzyme catalyses dCTP + H2O + H(+) = dUTP + NH4(+). Its pathway is pyrimidine metabolism; dUMP biosynthesis; dUMP from dCTP (dUTP route): step 1/2. Its function is as follows. Catalyzes the deamination of dCTP to dUTP. The sequence is that of dCTP deaminase from Novosphingobium aromaticivorans (strain ATCC 700278 / DSM 12444 / CCUG 56034 / CIP 105152 / NBRC 16084 / F199).